The sequence spans 299 residues: Bifunctional protein FolD (299 aa).

NADP(+)-binding positions include 168 to 170 (GRS), Ser-193, and Ile-234.

It belongs to the tetrahydrofolate dehydrogenase/cyclohydrolase family. Homodimer.

It catalyses the reaction (6R)-5,10-methylene-5,6,7,8-tetrahydrofolate + NADP(+) = (6R)-5,10-methenyltetrahydrofolate + NADPH. It carries out the reaction (6R)-5,10-methenyltetrahydrofolate + H2O = (6R)-10-formyltetrahydrofolate + H(+). Its pathway is one-carbon metabolism; tetrahydrofolate interconversion. Functionally, catalyzes the oxidation of 5,10-methylenetetrahydrofolate to 5,10-methenyltetrahydrofolate and then the hydrolysis of 5,10-methenyltetrahydrofolate to 10-formyltetrahydrofolate. The polypeptide is Bifunctional protein FolD (Bartonella quintana (strain Toulouse) (Rochalimaea quintana)).